We begin with the raw amino-acid sequence, 453 residues long: Nuclear hormone receptor family member nhr-12 (453 aa).

The segment at 1–37 is disordered; sequence MEQIPQEQKTEPFLASFTTTEKLGTETPTTSITPNTQ. Over residues 18–36 the composition is skewed to low complexity; sequence TTTEKLGTETPTTSITPNT. A DNA-binding region (nuclear receptor) is located at residues 44-119; it reads KPNCAVCNEV…VGMNPECVQN (76 aa). 2 consecutive NR C4-type zinc fingers follow at residues 47 to 67 and 83 to 107; these read CAVCNEVGDGLHFGAEACRAC and CRAGRNCEVSSNIRCMCRSCRYDKC. An NR LBD domain is found at 178 to 451; it reads FSPASLPGLS…ENFVNIINGK (274 aa).

The protein belongs to the nuclear hormone receptor family.

It is found in the nucleus. Its function is as follows. Orphan nuclear receptor. The chain is Nuclear hormone receptor family member nhr-12 (nhr-12) from Caenorhabditis elegans.